Consider the following 228-residue polypeptide: Sec-independent protein translocase protein TatB (228 aa).

A helical transmembrane segment spans residues 1–21; it reads MFDFGLGELIFVGIIALIVLG. Disordered regions lie at residues 106 to 164 and 196 to 228; these read TPAD…TDKD and VPHT…VRKS. The span at 135–151 shows a compositional bias: basic and acidic residues; sequence PSERSDTSAETLGDDRQ. Over residues 206-228 the composition is skewed to basic residues; that stretch reads AINRKRDFRPKHRAKPKLRVRKS.

The protein belongs to the TatB family. In terms of assembly, the Tat system comprises two distinct complexes: a TatABC complex, containing multiple copies of TatA, TatB and TatC subunits, and a separate TatA complex, containing only TatA subunits. Substrates initially bind to the TatABC complex, which probably triggers association of the separate TatA complex to form the active translocon.

Its subcellular location is the cell inner membrane. In terms of biological role, part of the twin-arginine translocation (Tat) system that transports large folded proteins containing a characteristic twin-arginine motif in their signal peptide across membranes. Together with TatC, TatB is part of a receptor directly interacting with Tat signal peptides. TatB may form an oligomeric binding site that transiently accommodates folded Tat precursor proteins before their translocation. This chain is Sec-independent protein translocase protein TatB, found in Neisseria gonorrhoeae (strain ATCC 700825 / FA 1090).